A 201-amino-acid chain; its full sequence is Sec-independent protein translocase protein TatB (201 aa).

The helical transmembrane segment at 1–21 (MLDLGWSEILVIAVVLIVVVG) threads the bilayer. Positions 96-201 (LSEAAKAKPA…RRKKTAGTAP (106 aa)) are disordered. 2 stretches are compositionally biased toward low complexity: residues 102–114 (AKPA…AADS) and 159–187 (TSAK…APAK). Over residues 189-201 (PSPRRKKTAGTAP) the composition is skewed to basic residues.

It belongs to the TatB family. In terms of assembly, the Tat system comprises two distinct complexes: a TatABC complex, containing multiple copies of TatA, TatB and TatC subunits, and a separate TatA complex, containing only TatA subunits. Substrates initially bind to the TatABC complex, which probably triggers association of the separate TatA complex to form the active translocon.

It is found in the cell inner membrane. Functionally, part of the twin-arginine translocation (Tat) system that transports large folded proteins containing a characteristic twin-arginine motif in their signal peptide across membranes. Together with TatC, TatB is part of a receptor directly interacting with Tat signal peptides. TatB may form an oligomeric binding site that transiently accommodates folded Tat precursor proteins before their translocation. This chain is Sec-independent protein translocase protein TatB, found in Chelativorans sp. (strain BNC1).